We begin with the raw amino-acid sequence, 206 residues long: Cytochrome c biogenesis ATP-binding export protein CcmA (206 aa).

Residues Leu-4 to Leu-205 form the ABC transporter domain. Gly-36–Thr-43 provides a ligand contact to ATP.

Belongs to the ABC transporter superfamily. CcmA exporter (TC 3.A.1.107) family. As to quaternary structure, the complex is composed of two ATP-binding proteins (CcmA) and two transmembrane proteins (CcmB).

It is found in the cell inner membrane. The catalysed reaction is heme b(in) + ATP + H2O = heme b(out) + ADP + phosphate + H(+). Its function is as follows. Part of the ABC transporter complex CcmAB involved in the biogenesis of c-type cytochromes; once thought to export heme, this seems not to be the case, but its exact role is uncertain. Responsible for energy coupling to the transport system. The sequence is that of Cytochrome c biogenesis ATP-binding export protein CcmA from Nitrosospira multiformis (strain ATCC 25196 / NCIMB 11849 / C 71).